The chain runs to 540 residues: Medium/long-chain-fatty-acid--[acyl-carrier-protein] ligase FadD10 (540 aa).

Residue T177 participates in Mg(2+) binding. ATP contacts are provided by I226, V316, and S320. E321 is a binding site for Mg(2+). D408 provides a ligand contact to ATP.

Belongs to the ATP-dependent AMP-binding enzyme family. In terms of assembly, homodimer. The cofactor is Mg(2+).

The protein resides in the cytoplasm. It carries out the reaction a medium-chain fatty acid + holo-[ACP] + ATP = a medium-chain fatty acyl-[ACP] + AMP + diphosphate. It catalyses the reaction a medium-chain fatty acid + ATP + H(+) = a medium-chain fatty acyl-AMP + diphosphate. The catalysed reaction is a medium-chain fatty acyl-AMP + holo-[ACP] = a medium-chain fatty acyl-[ACP] + AMP + H(+). The enzyme catalyses a long-chain fatty acid + holo-[ACP] + ATP = a long-chain fatty acyl-[ACP] + AMP + diphosphate. It carries out the reaction a long-chain fatty acid + ATP + H(+) = a long-chain fatty acyl-AMP + diphosphate. It catalyses the reaction a long-chain fatty acyl-AMP + holo-[ACP] = a long-chain fatty acyl-[ACP] + AMP + H(+). The catalysed reaction is a (2E)-enoyl fatty acid + holo-[ACP] + ATP = a (2E)-enoyl-[ACP] + AMP + diphosphate. The enzyme catalyses a (2E)-enoyl fatty acid + ATP + H(+) = a (2E)-2-fatty-enoyl-AMP + diphosphate. It carries out the reaction a (2E)-2-fatty-enoyl-AMP + holo-[ACP] = a (2E)-enoyl-[ACP] + AMP + H(+). It catalyses the reaction a (3R)-3-isocyanyl-fatty acid + holo-[ACP] + ATP = a (3R)-3-isocyanyl-fatty acyl-[ACP] + AMP + diphosphate. The catalysed reaction is a (3R)-3-isocyanyl-fatty acid + ATP + H(+) = a (3R)-3-isocyanyl-fatty acyl-AMP + diphosphate. The enzyme catalyses a (3R)-3-isocyanyl-fatty acyl-AMP + holo-[ACP] = a (3R)-3-isocyanyl-fatty acyl-[ACP] + AMP + H(+). It participates in lipid metabolism; fatty acid metabolism. In terms of biological role, acyl:acyl-carrier protein ligase involved in the biosynthesis of a unique class of isonitrile lipopeptides (INLPs) that seem to function as virulence factors in M.tuberculosis and to play a role in metal acquisition. Catalyzes the activation of medium/long-chain fatty acids as acyl-adenylates (acyl-AMP), which are then transferred to the phosphopantetheine arm of the acyl-carrier protein (ACP) MT0109. Acts twice during the INLP pathway, catalyzing the activation of a (2E)-enoyl fatty acid as well as the corresponding (3R)-3-isocyanyl-fatty acid as acyl-adenylates (acyl-AMP), and then the acyl transfer to the dedicated acyl-carrier protein MT0109. This is Medium/long-chain-fatty-acid--[acyl-carrier-protein] ligase FadD10 (fadD10) from Mycobacterium tuberculosis (strain CDC 1551 / Oshkosh).